Here is a 212-residue protein sequence, read N- to C-terminus: MGQKTHPIGFRLGVIKEWPSKWYAPKKEYSKLLHEDLKIKNYIKERYKVAGVSKVEIERIVDKVRVKIHTARPAIVIGRRGQEVENLKKTLEKMLPGKEITISVVEVRVPELDAQLVAQDIATQIERRVSHRRAMKRAIDNALKAGAKGVKVQVKGRIGGAELARKEWFLVGRMPLQTLRADIDYGFATAYTKYGILSVKVWIYKGDVLNGR.

One can recognise a KH type-2 domain in the interval 39–108; it reads IKNYIKERYK…EITISVVEVR (70 aa).

It belongs to the universal ribosomal protein uS3 family. As to quaternary structure, part of the 30S ribosomal subunit. Forms a tight complex with proteins S10 and S14.

Functionally, binds the lower part of the 30S subunit head. Binds mRNA in the 70S ribosome, positioning it for translation. This Aquifex aeolicus (strain VF5) protein is Small ribosomal subunit protein uS3.